We begin with the raw amino-acid sequence, 442 residues long: UDP-N-acetylglucosamine--peptide N-acetylglucosaminyltransferase stabilizing protein GtfB (442 aa).

The protein belongs to the GtfB family. As to quaternary structure, interacts with glycosyltransferase GtfA (Gtf1). Interacts with glycosyltransferase GtfA; probably forms a heterotetramer with 2 subunits each of GtfA and GtfB. Part of the accessory SecA2/SecY2 protein translocation apparatus.

The protein resides in the cell membrane. It functions in the pathway protein modification; protein glycosylation. Its function is as follows. Required for the polymorphic O-glycosylation of the serine-rich repeat protein Srr2. A stabilizing protein that is part of the accessory SecA2/SecY2 system specifically required to export serine-rich repeat proteins, probably Srr2 in this organism. The GtfA-GtfB (Gtf1-Gtf2 in this bacteria) complex adds GlcNAc from UDP-GlcNAc to Srr2 substrate, attaching the first sugar residue. Stabilizes the glycosylation activity of GtfA in vivo. Upon expression in a gtfB deletion mutant of S.parasanguis, GtfB confers incorrect glycosylation and partial complementation of a biofilm formation defect, while GtfA/GtfB restores correct expression of serine-rich repeat protein Fap1 and completely restores a biofilm formation defect in a S.parasanguis double gtfA-gtfB deletion. In Streptococcus agalactiae, this protein is UDP-N-acetylglucosamine--peptide N-acetylglucosaminyltransferase stabilizing protein GtfB.